A 101-amino-acid polypeptide reads, in one-letter code: Doublesex- and mab-3-related transcription factor 1 (101 aa).

A DNA-binding region (DM) is located at residues 1 to 13; that stretch reads SLIAERQRVMAAQ. Over residues 52-75 the composition is skewed to low complexity; sequence CLLLESSSPTHSTSTVTTVSTSPS. Residues 52 to 79 form a disordered region; sequence CLLLESSSPTHSTSTVTTVSTSPSEGRM.

The protein belongs to the DMRT family.

The protein resides in the nucleus. In terms of biological role, may be required for testis development. This Alligator mississippiensis (American alligator) protein is Doublesex- and mab-3-related transcription factor 1 (DMRT1).